A 275-amino-acid chain; its full sequence is NH(3)-dependent NAD(+) synthetase (275 aa).

Residue 46 to 53 (GISGGQDS) coordinates ATP. Mg(2+) is bound at residue D52. R140 contacts deamido-NAD(+). T160 is a binding site for ATP. A Mg(2+)-binding site is contributed by E165. K173 and D180 together coordinate deamido-NAD(+). ATP contacts are provided by K189 and T211. 260–261 (HK) contributes to the deamido-NAD(+) binding site.

It belongs to the NAD synthetase family. As to quaternary structure, homodimer.

The enzyme catalyses deamido-NAD(+) + NH4(+) + ATP = AMP + diphosphate + NAD(+) + H(+). The protein operates within cofactor biosynthesis; NAD(+) biosynthesis; NAD(+) from deamido-NAD(+) (ammonia route): step 1/1. Its function is as follows. Catalyzes the ATP-dependent amidation of deamido-NAD to form NAD. Uses ammonia as a nitrogen source. The sequence is that of NH(3)-dependent NAD(+) synthetase from Escherichia coli O7:K1 (strain IAI39 / ExPEC).